A 148-amino-acid polypeptide reads, in one-letter code: Large ribosomal subunit protein bL9 (148 aa).

This sequence belongs to the bacterial ribosomal protein bL9 family.

In terms of biological role, binds to the 23S rRNA. The polypeptide is Large ribosomal subunit protein bL9 (Staphylococcus epidermidis (strain ATCC 35984 / DSM 28319 / BCRC 17069 / CCUG 31568 / BM 3577 / RP62A)).